Here is a 409-residue protein sequence, read N- to C-terminus: Nucleoprotein (409 aa).

5 disordered regions span residues 1–32, 44–69, 121–145, 164–195, and 238–259; these read MASG…SSGN, LNSP…QQHG, ADVK…LRFS, RSGR…SEGD, and VDQV…DKMN. Over residues 15-31 the composition is skewed to low complexity; that stretch reads PVIKLGGPKPPKVGSSG. The segment at 29–160 is RNA-binding; sequence SSGNASWFQA…GNFRWDFIPL (132 aa). The 126-residue stretch at 31-156 folds into the CoV N NTD domain; sequence GNASWFQAIK…GGPDGNFRWD (126 aa). A compositionally biased stretch (low complexity) spans 164–179; the sequence is RSGRSTAASSAASSRA. Basic and acidic residues-rich tracts occupy residues 180–192 and 247–259; these read PSRD…RSGS and KGKE…DKMN. A phosphoserine; by host mark is found at serine 190 and serine 192. Positions 215-331 constitute a CoV N CTD domain; the sequence is TKAKADEMAH…QCVDGVGTRP (117 aa). The segment at 226-333 is dimerization; sequence RYCKRTIPPG…VDGVGTRPKD (108 aa). A disulfide bridge connects residues cysteine 320 and cysteine 323. Positions 326–409 are disordered; that stretch reads GVGTRPKDDE…GDSALGENEL (84 aa). Low complexity predominate over residues 341 to 358; the sequence is RSSSRPATRTSSPALRQQ. Residues 368 to 384 are compositionally biased toward basic and acidic residues; sequence KQDDEVDKALTSDEERN. Residue threonine 378 is modified to Phosphothreonine; by host. Phosphoserine; by host is present on serine 379.

It belongs to the gammacoronavirus nucleocapsid protein family. As to quaternary structure, homooligomer. Both monomeric and oligomeric forms interact with RNA. Interacts with protein M. Interacts with NSP3; this interaction serves to tether the genome to the newly translated replicase-transcriptase complex at a very early stage of infection. ADP-ribosylated. The ADP-ribosylation is retained in the virion during infection. In terms of processing, phosphorylated on serine and threonine residues.

The protein resides in the virion. It localises to the host endoplasmic reticulum-Golgi intermediate compartment. Its subcellular location is the host Golgi apparatus. Functionally, packages the positive strand viral genome RNA into a helical ribonucleocapsid (RNP) and plays a fundamental role during virion assembly through its interactions with the viral genome and membrane protein M. Plays an important role in enhancing the efficiency of subgenomic viral RNA transcription as well as viral replication. In Gallus gallus (Chicken), this protein is Nucleoprotein.